The sequence spans 137 residues: NADH dehydrogenase [ubiquinone] 1 beta subcomplex subunit 7 (137 aa).

G2 carries the N-myristoyl glycine lipid modification. A CHCH domain is found at 56–98; the sequence is RDYCAHHLIRLLKCKRDSFPNFLACKQERHDWDYCEHRDYVMR. Residues 59-69 carry the Cx9C motif 1 motif; that stretch reads CAHHLIRLLKC. Disulfide bonds link C59–C90 and C69–C80. Position 73 is a phosphoserine (S73). Positions 80–90 match the Cx9C motif 2 motif; it reads CKQERHDWDYC. Residues 113 to 137 are disordered; it reads KRREKKAAELAKGQGPGEVDPKVAL.

The protein belongs to the complex I NDUFB7 subunit family. Complex I is composed of 45 different subunits.

It localises to the mitochondrion inner membrane. It is found in the mitochondrion intermembrane space. Accessory subunit of the mitochondrial membrane respiratory chain NADH dehydrogenase (Complex I), that is believed not to be involved in catalysis. Complex I functions in the transfer of electrons from NADH to the respiratory chain. The immediate electron acceptor for the enzyme is believed to be ubiquinone. This is NADH dehydrogenase [ubiquinone] 1 beta subcomplex subunit 7 (NDUFB7) from Homo sapiens (Human).